The primary structure comprises 423 residues: D-tagatose-1,6-bisphosphate aldolase subunit GatZ (423 aa).

It belongs to the GatZ/KbaZ family. GatZ subfamily. As to quaternary structure, forms a complex with GatY.

The protein operates within carbohydrate metabolism; D-tagatose 6-phosphate degradation; D-glyceraldehyde 3-phosphate and glycerone phosphate from D-tagatose 6-phosphate: step 2/2. Its function is as follows. Component of the tagatose-1,6-bisphosphate aldolase GatYZ that is required for full activity and stability of the Y subunit. Could have a chaperone-like function for the proper and stable folding of GatY. When expressed alone, GatZ does not show any aldolase activity. Is involved in the catabolism of galactitol. The sequence is that of D-tagatose-1,6-bisphosphate aldolase subunit GatZ from Salmonella paratyphi B (strain ATCC BAA-1250 / SPB7).